The sequence spans 436 residues: Acetyl-CoA decarbonylase/synthase complex subunit delta 1 (436 aa).

It belongs to the CdhD family. As to quaternary structure, heterodimer of delta and gamma chains. The ACDS complex is made up of alpha, epsilon, beta, gamma and delta chains with a probable stoichiometry of (alpha(2)epsilon(2))(4)-beta(8)-(gamma(1)delta(1))(8) (Potential).

The protein operates within one-carbon metabolism; methanogenesis from acetate. Part of a complex that catalyzes the reversible cleavage of acetyl-CoA, allowing growth on acetate as sole source of carbon and energy. Probably maintains the overall quaternary structure of the ACDS complex. This Methanosarcina acetivorans (strain ATCC 35395 / DSM 2834 / JCM 12185 / C2A) protein is Acetyl-CoA decarbonylase/synthase complex subunit delta 1 (cdhD1).